The chain runs to 204 residues: MKIGVLALQGDVEEHANAFKEAGREVGVDVDVVEVKKPGDLKDIKALAIPGGESTTIGRLAKRTGLLDAVKKAIEGGVPALGTCAGAIFMAKEVKDAVVGATGQPVLGVMDIAVVRNAFGRQRESFEAEVVLENLGKLKAVFIRAPAFVRAWGSAKLLAPLRHNQLGLVYAAAVQNNMVATAFHPELTTTAVHKWVINMALGRF.

Residue G52–S54 participates in L-glutamine binding. The Nucleophile role is filled by C84. Residues R116 and I143–R144 each bind L-glutamine. Catalysis depends on charge relay system residues H184 and E186.

The protein belongs to the glutaminase PdxT/SNO family. In the presence of PdxS, forms a dodecamer of heterodimers. Only shows activity in the heterodimer.

It carries out the reaction aldehydo-D-ribose 5-phosphate + D-glyceraldehyde 3-phosphate + L-glutamine = pyridoxal 5'-phosphate + L-glutamate + phosphate + 3 H2O + H(+). It catalyses the reaction L-glutamine + H2O = L-glutamate + NH4(+). Its pathway is cofactor biosynthesis; pyridoxal 5'-phosphate biosynthesis. Functionally, catalyzes the hydrolysis of glutamine to glutamate and ammonia as part of the biosynthesis of pyridoxal 5'-phosphate. The resulting ammonia molecule is channeled to the active site of PdxS. The chain is Pyridoxal 5'-phosphate synthase subunit PdxT from Pyrobaculum aerophilum (strain ATCC 51768 / DSM 7523 / JCM 9630 / CIP 104966 / NBRC 100827 / IM2).